A 721-amino-acid polypeptide reads, in one-letter code: Polyribonucleotide nucleotidyltransferase (721 aa).

D495 and D501 together coordinate Mg(2+). Residues 562–621 enclose the KH domain; sequence PRLLSFRIDPELIGTVIGPGGRTIKGITERTNTKIDIEDSGIVTIASHDGAAAEEAQKII. The region spanning 631–699 is the S1 motif domain; the sequence is GEMFSGSITR…NRGRINLTLR (69 aa). The disordered stretch occupies residues 700-721; it reads GVPQSGESTEVEPQPTPVAPLS.

It belongs to the polyribonucleotide nucleotidyltransferase family. It depends on Mg(2+) as a cofactor.

The protein localises to the cytoplasm. It catalyses the reaction RNA(n+1) + phosphate = RNA(n) + a ribonucleoside 5'-diphosphate. In terms of biological role, involved in mRNA degradation. Catalyzes the phosphorolysis of single-stranded polyribonucleotides processively in the 3'- to 5'-direction. This Synechococcus sp. (strain CC9902) protein is Polyribonucleotide nucleotidyltransferase.